The chain runs to 220 residues: UPF0502 protein VV2_0756 (220 aa).

Belongs to the UPF0502 family.

This is UPF0502 protein VV2_0756 from Vibrio vulnificus (strain CMCP6).